The sequence spans 377 residues: Probable riboflavin import permease protein RfuC (377 aa).

Transmembrane regions (helical) follow at residues 4–24, 49–69, 72–92, 98–118, 135–155, 182–202, 223–245, 249–268, 274–294, and 303–323; these read VINS…VIVL, ALFH…CALK, MINL…ALLL, VGFL…AGIL, ITSF…IITV, FGVP…GCFF, FVGF…LFGL, FSVV…GMGY, ALIA…FAWM, and LGAH…FLLI.

The protein belongs to the binding-protein-dependent transport system permease family. The complex is probably composed of two ATP-binding proteins (RfuB), two transmembrane proteins (RfuC and RfuD) and a solute-binding protein (RfuA).

Its subcellular location is the cell inner membrane. In terms of biological role, probably part of the ABC transporter complex RfuABCD involved in riboflavin import. Probably responsible for the translocation of the substrate across the membrane. The chain is Probable riboflavin import permease protein RfuC from Treponema pallidum (strain Nichols).